We begin with the raw amino-acid sequence, 322 residues long: Mas-related G-protein coupled receptor member X1 (322 aa).

Topologically, residues 1 to 30 are extracellular; the sequence is MDPTISSHDTESTPLNETGHPNCTPILTLS. N-linked (GlcNAc...) asparagine glycosylation occurs at Asn16. Residues 31–51 form a helical membrane-spanning segment; it reads FLVLITTLVGLAGNTIVLWLL. Residues 52–59 are Cytoplasmic-facing; the sequence is GFRMRRKA. A helical membrane pass occupies residues 60–80; that stretch reads ISVYILNLALADSFFLCCHFI. The Extracellular segment spans residues 81–100; the sequence is DSLLRIIDFYGLYAHKLSKD. A helical transmembrane segment spans residues 101–121; it reads ILGNAAIIPYISGLSILSAIS. Residues 122–142 lie on the Cytoplasmic side of the membrane; the sequence is TERCLCVLWPIWYHCHRPRNM. Residues 143–163 form a helical membrane-spanning segment; the sequence is SAIICALIWVLSFLMGILDWF. At 164 to 179 the chain is on the extracellular side; the sequence is SGFLGETHHHLWKNVD. Residues 180 to 200 form a helical membrane-spanning segment; it reads FIITAFLIFLFMLLSGSSLAL. The Cytoplasmic portion of the chain corresponds to 201–223; that stretch reads LLRILCGPRRKPLSRLYVTIALT. Residues 224-244 traverse the membrane as a helical segment; it reads VMVYLICGLPLGLYLFLLYWF. Topologically, residues 245–257 are extracellular; that stretch reads GVHLHYPFCHIYQ. Residues 258–278 traverse the membrane as a helical segment; sequence VTAVLSCVNSSANPIIYFLVG. Topologically, residues 279 to 322 are cytoplasmic; it reads SFRQHRKHRSLKRVLKRALEDTPEEDEYTDSHLHKTTEISESRY.

The protein belongs to the G-protein coupled receptor 1 family. Mas subfamily. As to expression, expressed in a subset of IB4-positive small diameter nociceptive dorsal root neurons.

The protein localises to the cell membrane. Its function is as follows. Orphan receptor activated by neuropeptides terminating in Arg-Phe or Arg-Phe-amide. Mediates its action by association with G proteins that activate a phosphatidylinositol-calcium second messenger system. Its effect is mediated by G(q) and G(11) proteins. May regulate the function of nociceptive neurons by modulation of pain perception. This is Mas-related G-protein coupled receptor member X1 from Mus musculus (Mouse).